The chain runs to 695 residues: Centrosomal protein kizuna (695 aa).

Gly residues predominate over residues 1–12; it reads MPRGRGGGGGGL. Positions 1 to 24 are disordered; the sequence is MPRGRGGGGGGLRQASATSAPLAS. Positions 15 to 24 are enriched in low complexity; sequence ASATSAPLAS. 2 coiled-coil regions span residues 29-57 and 102-132; these read ERVGQLQQALRDSEKKRLDLEDKLYEYNK and VEHLTTNTEKLQKLKTEYEAEVKRMRLLSKD. Disordered regions lie at residues 261 to 313, 351 to 391, 444 to 465, and 633 to 695; these read EIGS…SDRE, HSAW…SDLT, QSFPDSKREPSPDSPRQPEKVP, and SEAS…FYDT. 2 stretches are compositionally biased toward polar residues: residues 263-274 and 282-297; these read GSSTQHSKSNLS and LHSSLQERLSPENSIT. Composition is skewed to basic and acidic residues over residues 299-313 and 360-377; these read LKCDSSSRSEGSDRE and DLDHGDSKSQKAVLKHEE. Low complexity predominate over residues 382–391; that stretch reads GSSCSSSDLT. Position 391 is a phosphothreonine; by PLK1 (threonine 391). Residues 448-465 show a composition bias toward basic and acidic residues; it reads DSKREPSPDSPRQPEKVP. The span at 633-645 shows a compositional bias: low complexity; sequence SEASFSSSEGSPL. A phosphoserine mark is found at serine 667, serine 670, and serine 672. Basic and acidic residues predominate over residues 676 to 686; that stretch reads AALRPRDHDMP.

This sequence belongs to the kizuna family. Interacts with AKAP9, CEP72, ODF2, PCNT and TUBGCP2. Phosphorylation at Thr-391 by PLK1 is not needed for centrosomal localization or pericentriolar material expansion but is indispensable for spindle-pole stabilization.

The protein resides in the cytoplasm. Its subcellular location is the cytoskeleton. The protein localises to the microtubule organizing center. It localises to the centrosome. It is found in the cilium basal body. Centrosomal protein required for establishing a robust mitotic centrosome architecture that can endure the forces that converge on the centrosomes during spindle formation. Required for stabilizing the expanded pericentriolar material around the centriole. This Mus musculus (Mouse) protein is Centrosomal protein kizuna (Kiz).